The following is a 293-amino-acid chain: L-ornithine N(alpha)-acyltransferase (293 aa).

This sequence belongs to the acetyltransferase family. OlsB subfamily.

The catalysed reaction is a (3R)-hydroxyacyl-[ACP] + L-ornithine = a lyso-ornithine lipid + holo-[ACP] + H(+). Its pathway is lipid metabolism. Functionally, catalyzes the first step in the biosynthesis of ornithine lipids, which are phosphorus-free membrane lipids. Catalyzes the 3-hydroxyacyl-acyl carrier protein-dependent acylation of ornithine to form lyso-ornithine lipid (LOL). The protein is L-ornithine N(alpha)-acyltransferase of Agrobacterium fabrum (strain C58 / ATCC 33970) (Agrobacterium tumefaciens (strain C58)).